Here is a 439-residue protein sequence, read N- to C-terminus: Probable RNA-binding protein 23 (439 aa).

Positions 13–159 are disordered; sequence MLEAPYKKEE…PVREPVDNLS (147 aa). Residues 17–34 are compositionally biased toward basic and acidic residues; sequence PYKKEEDEQQRKEVKKDY. Residues 36 to 57 show a composition bias toward low complexity; sequence SNTTSSTSNSGNETSGSSTIGE. Positions 60–90 are enriched in basic residues; that stretch reads KKKRSRSHNKSRDRKRSRSRDRDRYRRRNSR. The segment covering 103–125 has biased composition (basic and acidic residues); that stretch reads RSWDRRHGSESRSRDHRREDRVH. Phosphoserine is present on residues Ser128 and Ser149. Positions 144 to 159 are enriched in basic and acidic residues; that stretch reads HFREKSPVREPVDNLS. RRM domains lie at 166-243 and 263-341; these read RTVF…ASQA and MRLY…HVTE.

This sequence belongs to the splicing factor SR family. In terms of processing, aryl sulfonamide anticancer drugs, such as indisulam (E7070) or E7820, promote ubiquitination and subsequent degradation by the DCX(DCAF15) complex. Aryl sulfonamide anticancer drugs change the substrate specificity of DCAF15 by acting as a molecular glue that promotes binding between DCAF15 and weak affinity interactor RBM23. In terms of tissue distribution, highly expressed in placenta, liver, skeletal muscle, heart and kidney. Expressed at lower levels in the colon, thymus, spleen, small intestine and lung.

It is found in the nucleus. In terms of biological role, RNA-binding protein that acts both as a transcription coactivator and pre-mRNA splicing factor. Regulates steroid hormone receptor-mediated transcription, independently of the pre-mRNA splicing factor activity. The chain is Probable RNA-binding protein 23 from Homo sapiens (Human).